A 244-amino-acid chain; its full sequence is Krueppel-like factor 9 (244 aa).

The interval 80–142 (SVCSDSLESP…AKGKHASEKR (63 aa)) is disordered. Position 122 is a phosphoserine (Ser-122). 3 consecutive C2H2-type zinc fingers follow at residues 143–167 (HKCPYSGCGKVYGKSSHLKAHYRVH), 173–197 (FPCTWPDCLKKFSRSDELTRHYRTH), and 203–225 (FRCPLCEKRFMRSDHLTKHARRH).

It belongs to the Sp1 C2H2-type zinc-finger protein family. Interacts with ZZEF1. In terms of tissue distribution, epidermis (at protein level).

It is found in the nucleus. In terms of biological role, transcription factor that binds to GC box promoter elements. Selectively activates mRNA synthesis from genes containing tandem repeats of GC boxes but represses genes with a single GC box. Acts as an epidermal circadian transcription factor regulating keratinocyte proliferation. In Homo sapiens (Human), this protein is Krueppel-like factor 9 (KLF9).